The primary structure comprises 158 residues: NADPH-dependent 7-cyano-7-deazaguanine reductase (158 aa).

Cys-56 functions as the Thioimide intermediate in the catalytic mechanism. The active-site Proton donor is Asp-63. Residues 78–80 (VES) and 97–98 (HE) contribute to the substrate site.

Belongs to the GTP cyclohydrolase I family. QueF type 1 subfamily.

It localises to the cytoplasm. It catalyses the reaction 7-aminomethyl-7-carbaguanine + 2 NADP(+) = 7-cyano-7-deazaguanine + 2 NADPH + 3 H(+). The protein operates within tRNA modification; tRNA-queuosine biosynthesis. Catalyzes the NADPH-dependent reduction of 7-cyano-7-deazaguanine (preQ0) to 7-aminomethyl-7-deazaguanine (preQ1). This Rhodopseudomonas palustris (strain BisB5) protein is NADPH-dependent 7-cyano-7-deazaguanine reductase.